The chain runs to 1353 residues: Trifunctional purine biosynthetic protein adenosine-3 (1353 aa).

The ATP-grasp domain occupies 114–321 (KDFMLRHGIP…LFDVMEACCS (208 aa)). Residues 193–196 (EELL), E200, R223, and N232 each bind ATP. Positions 291 and 293 each coordinate Mg(2+). Positions 441 to 1155 (GLSYKDSGVD…QKMLSQRRKR (715 aa)) are AIRS domain. A phosphoserine mark is found at S814 and S816. Residues 1153 to 1353 (RKRVAVLISG…ALISPEVSSQ (201 aa)) form a GART domain region. N(1)-(5-phospho-beta-D-ribosyl)glycinamide is bound at residue 1164-1166 (GSN). Residues R1219, 1244 to 1247 (MRVL), and N1261 each bind (6R)-10-formyltetrahydrofolate. The active-site Proton donor is the H1263. 1295 to 1299 (DEGVD) is a (6R)-10-formyltetrahydrofolate binding site. 1325-1328 (HKAE) serves as a coordination point for N(1)-(5-phospho-beta-D-ribosyl)glycinamide.

It in the N-terminal section; belongs to the GARS family. The protein in the central section; belongs to the AIR synthase family. In the C-terminal section; belongs to the GART family. In terms of assembly, homodimer. Mg(2+) serves as cofactor. Mn(2+) is required as a cofactor.

It carries out the reaction 5-phospho-beta-D-ribosylamine + glycine + ATP = N(1)-(5-phospho-beta-D-ribosyl)glycinamide + ADP + phosphate + H(+). The catalysed reaction is 2-formamido-N(1)-(5-O-phospho-beta-D-ribosyl)acetamidine + ATP = 5-amino-1-(5-phospho-beta-D-ribosyl)imidazole + ADP + phosphate + H(+). The enzyme catalyses N(1)-(5-phospho-beta-D-ribosyl)glycinamide + (6R)-10-formyltetrahydrofolate = N(2)-formyl-N(1)-(5-phospho-beta-D-ribosyl)glycinamide + (6S)-5,6,7,8-tetrahydrofolate + H(+). Its pathway is purine metabolism; IMP biosynthesis via de novo pathway; 5-amino-1-(5-phospho-D-ribosyl)imidazole from N(2)-formyl-N(1)-(5-phospho-D-ribosyl)glycinamide: step 2/2. The protein operates within purine metabolism; IMP biosynthesis via de novo pathway; N(1)-(5-phospho-D-ribosyl)glycinamide from 5-phospho-alpha-D-ribose 1-diphosphate: step 2/2. It functions in the pathway purine metabolism; IMP biosynthesis via de novo pathway; N(2)-formyl-N(1)-(5-phospho-D-ribosyl)glycinamide from N(1)-(5-phospho-D-ribosyl)glycinamide (10-formyl THF route): step 1/1. Its function is as follows. Trifunctional enzyme that catalyzes three distinct reactions as part of the 'de novo' inosine monophosphate biosynthetic pathway. The chain is Trifunctional purine biosynthetic protein adenosine-3 from Drosophila melanogaster (Fruit fly).